The primary structure comprises 423 residues: Major royal jelly protein 9 (423 aa).

Residues 1–20 (MSFNIWWLILYFSIVCQAKA) form the signal peptide. 5 N-linked (GlcNAc...) asparagine glycosylation sites follow: N110, N118, N177, N196, and N345.

It belongs to the major royal jelly protein family. As to expression, expressed at very low levels in the hypopharyngeal glands of adult worker bees (at protein level); expression peaks at 12 days post eclosion. Secreted into bee venom in the sting apparatus (at protein level). Expressed in the brains of adult worker bees peaking at 12 days post eclosion (at protein level). Expressed in the spermatheca of adult queen bees (at protein level); expression levels are higher in mated queens than in virgin queens. Along with Mrjp8 expressed at very low levels in the head of worker bees compared to other major royal jelly proteins.

Its subcellular location is the secreted. Its function is as follows. Component of bee sting venom. Component of royal jelly, a substance produced in the hypopharyngeal gland containing proteins, free amino acids, fatty acids, sugars and other nutrients, which is fed to developing larvae by worker nurse bees; may be present only at trace levels. All larvae are fed some royal jelly (also known as worker jelly) early in their development but it forms the principal source of nutrition for larvae destined to become queen bees. Produced in the spermatheca of adult queen bees, along with other major royal jelly proteins, where it may act as a nutrient supply for sperm stored by mated queens, or be involved in energy metabolism. The chain is Major royal jelly protein 9 from Apis mellifera (Honeybee).